Reading from the N-terminus, the 1209-residue chain is 3',5'-cyclic-AMP phosphodiesterase, isoform I (1209 aa).

Disordered stretches follow at residues 16-35 (NVAK…GSGT), 59-82 (GGGS…KRKS), 275-353 (LYSG…PLPP), 372-403 (SATS…SPRI), 442-498 (ETLA…MQAE), 626-655 (VPAS…LSQG), and 754-792 (SAGQ…RLPT). 2 stretches are compositionally biased toward gly residues: residues 25 to 35 (SSNGTGNGSGT) and 59 to 77 (GGGS…GSGS). Residues 275–290 (LYSGSNPSTNPCQSAV) show a composition bias toward polar residues. Positions 291 to 314 (QNQGQNSNPNPNQNPNTNPNQNQQ) are enriched in low complexity. Polar residues predominate over residues 315–324 (RCSCQPQTSP). Over residues 372–383 (SATSSSAGTVPP) the composition is skewed to low complexity. The span at 385-400 (GQQTQEYIAGTSSTPS) shows a compositional bias: polar residues. Composition is skewed to low complexity over residues 445–462 (ASSS…NSSS) and 472–483 (TSSSASALATSH). Polar residues-rich tracts occupy residues 484-498 (PSNS…MQAE) and 627-645 (PASN…SRSG). Residues 795–1124 (VETPRENELG…DYYQSMIPPS (330 aa)) enclose the PDEase domain. His-871 (proton donor) is an active-site residue. 871–875 (HNSLH) is a 3',5'-cyclic AMP binding site. Positions 875, 911, 912, and 1029 each coordinate a divalent metal cation. Residues Asp-912, Asp-1029, and Gln-1080 each coordinate 3',5'-cyclic AMP. The segment covering 1146–1163 (EESDQENLAELEEGDESG) has biased composition (acidic residues). Positions 1146–1209 (EESDQENLAE…CQNQPQHGGM (64 aa)) are disordered. Residues 1164–1181 (GESTTTGTTGTTAASALS) show a composition bias toward low complexity. A compositionally biased stretch (gly residues) spans 1182-1193 (GAGGGGGGGGGM). The span at 1199 to 1209 (GCQNQPQHGGM) shows a compositional bias: polar residues.

This sequence belongs to the cyclic nucleotide phosphodiesterase family. PDE4 subfamily. As to quaternary structure, monomer. A divalent metal cation is required as a cofactor.

It carries out the reaction 3',5'-cyclic AMP + H2O = AMP + H(+). It participates in purine metabolism; 3',5'-cyclic AMP degradation; AMP from 3',5'-cyclic AMP: step 1/1. Hydrolyzes the second messenger cAMP, which is a key regulator of many important physiological processes. Vital for female fertility. Required for learning/memory. The protein is 3',5'-cyclic-AMP phosphodiesterase, isoform I of Drosophila melanogaster (Fruit fly).